The sequence spans 429 residues: Histidine--tRNA ligase (429 aa).

Belongs to the class-II aminoacyl-tRNA synthetase family. In terms of assembly, homodimer.

The protein resides in the cytoplasm. It catalyses the reaction tRNA(His) + L-histidine + ATP = L-histidyl-tRNA(His) + AMP + diphosphate + H(+). The polypeptide is Histidine--tRNA ligase (Cyanothece sp. (strain PCC 7425 / ATCC 29141)).